A 630-amino-acid chain; its full sequence is Mesothelin (630 aa).

The signal sequence occupies residues 1 to 36 (MALPTARPLLGSCGTPALGSLLFLLFSLGWVQPSRT). N-linked (GlcNAc...) asparagine glycosylation occurs at Asn-57. A Phosphoserine; by FAM20C modification is found at Ser-200. A required for megakaryocyte-potentiating factor activity region spans residues 262 to 286 (SIPQGIVAAWRQRSSRDPSWRQPER). A disulfide bond links Cys-302 and Cys-326. N-linked (GlcNAc...) asparagine glycosylation is found at Asn-388, Asn-496, and Asn-523. Ser-606 carries GPI-anchor amidated serine lipidation. Positions 607–630 (GTPCLLGPGPVLTVLALLLASTLA) are cleaved as a propeptide — removed in mature form.

This sequence belongs to the mesothelin family. In terms of assembly, interacts with MUC16. In terms of processing, both MPF and the cleaved form of mesothelin are N-glycosylated. Proteolytically cleaved by a furin-like convertase to generate megakaryocyte-potentiating factor (MPF), and the cleaved form of mesothelin. As to expression, expressed in lung. Expressed at low levels in heart, placenta and kidney. Expressed in mesothelial cells. Highly expressed in mesotheliomas, ovarian cancers, and some squamous cell carcinomas (at protein level).

The protein resides in the cell membrane. It is found in the golgi apparatus. It localises to the secreted. Functionally, membrane-anchored forms may play a role in cellular adhesion. Its function is as follows. Megakaryocyte-potentiating factor (MPF) potentiates megakaryocyte colony formation in vitro. This Homo sapiens (Human) protein is Mesothelin (MSLN).